Consider the following 37-residue polypeptide: MKIKASVKPRCEKCRIIRRNGRVMVICENPKHKQKQG.

Belongs to the bacterial ribosomal protein bL36 family.

This chain is Large ribosomal subunit protein bL36, found in Sulfurihydrogenibium sp. (strain YO3AOP1).